We begin with the raw amino-acid sequence, 574 residues long: Developmental and secondary metabolism regulator veA (574 aa).

Disordered stretches follow at residues 1–22, 39–60, 255–500, and 513–540; these read MATR…SRIT, ERAR…VDPP, RSSD…GAGK, and RSYE…YPRR. A Velvet domain is found at 25-230; that stretch reads GKKLTYKLNV…AEQGCRVRIR (206 aa). The Nuclear localization signal signature appears at 39–44; it reads ERARAC. Composition is skewed to pro residues over residues 314 to 323 and 330 to 341; these read RPLPPAPGPA and PAPPAPPAPPSH. 4 stretches are compositionally biased toward polar residues: residues 343–353, 385–394, 406–415, and 448–458; these read PGYQSHLSFGS, HARNPSTSAE, RMSTERSSYP, and VAQSAAPRSQT. The interval 457-498 is PEST; sequence QTPSSSLVPSLPPLKALSGDYPNNLSQSSSSTSQSPSHDLGA. Composition is skewed to low complexity over residues 459 to 474 and 482 to 493; these read PSSS…KALS and SQSSSSTSQSPS. Over residues 513–525 the composition is skewed to basic and acidic residues; sequence RSYEDSFGHDDRP.

The protein belongs to the velvet family. VeA subfamily. As to quaternary structure, component of the heterotrimeric velvet complex composed of laeA, veA and velB; VeA acting as a bridging protein between laeA and velB.

It localises to the nucleus. The protein localises to the cytoplasm. Functionally, component of the velvet transcription factor complex that controls sexual/asexual developmental ratio in response to light, promoting sexual development in the darkness while stimulating asexual sporulation under illumination. The velvet complex hat acts as a global regulator for secondary metabolite gene expression. Controls the expression of the cyclopiazonic acid, aflatrem, and aflatoxin gene clusters. Controls the expression of the sclerotium-specific pigment asparasone A gene cluster. Controls the expression of the aflavarin gene cluster. also controls the production of hydrolases and other extracellular proteins during growth on natural starch-based substrates. Regulates genes involved in the High Osmolarity Glycerol (HOG) signaling pathway. Required for the conidial and sclerotial density-dependent production. The chain is Developmental and secondary metabolism regulator veA from Aspergillus flavus (strain ATCC 200026 / FGSC A1120 / IAM 13836 / NRRL 3357 / JCM 12722 / SRRC 167).